The primary structure comprises 209 residues: Protein phosphotransferase ChpT (209 aa).

Position 22 is a phosphohistidine (histidine 22).

The protein belongs to the ChpT phosphotransferase family. In terms of assembly, homodimer. Forms an asymmetric heterotetramer with CtrA (2:2). There are at least two modes of interaction between ChpT and CtrA, only one of which is competent to catalyze His-Asp phosphoryl transfer. Is phosphorylated by CckA-P on His-22.

Its subcellular location is the cytoplasm. Component of a regulatory phosphorelay system that controls B.abortus cell growth, division, and intracellular survival inside mammalian host cells. This signaling pathway is composed of CckA, ChpT, CtrA and CpdR. ChpT efficiently and specifically shuttles phosphoryl groups from the CckA kinase to the receiver domains of both CtrA and CpdR. Does not bind ATP. Overexpression of chpT results in a defect in cell morphology, DNA content, and intracellular survival in human macrophages. The sequence is that of Protein phosphotransferase ChpT from Brucella abortus (strain 2308).